Reading from the N-terminus, the 179-residue chain is Peptidyl-tRNA hydrolase (179 aa).

Position 14 (tyrosine 14) interacts with tRNA. Catalysis depends on histidine 19, which acts as the Proton acceptor. TRNA-binding residues include tyrosine 61, asparagine 63, and asparagine 107.

Belongs to the PTH family. Monomer.

The protein resides in the cytoplasm. It carries out the reaction an N-acyl-L-alpha-aminoacyl-tRNA + H2O = an N-acyl-L-amino acid + a tRNA + H(+). Functionally, hydrolyzes ribosome-free peptidyl-tRNAs (with 1 or more amino acids incorporated), which drop off the ribosome during protein synthesis, or as a result of ribosome stalling. Catalyzes the release of premature peptidyl moieties from peptidyl-tRNA molecules trapped in stalled 50S ribosomal subunits, and thus maintains levels of free tRNAs and 50S ribosomes. In Campylobacter lari (strain RM2100 / D67 / ATCC BAA-1060), this protein is Peptidyl-tRNA hydrolase.